The chain runs to 676 residues: Electrogenic aspartate/glutamate antiporter SLC25A13, mitochondrial (676 aa).

The residue at position 2 (Ala2) is an N-acetylalanine. The tract at residues 2 to 295 (AAAKVALTKR…TLADIERIAP (294 aa)) is regulatory N-terminal domain. Residues 2-332 (AAAKVALTKR…LLQLAESAYR (331 aa)) are Mitochondrial intermembrane-facing. EF-hand domains lie at 51 to 86 (SQPN…SVLC), 87 to 122 (APDA…TTIH), 125 to 157 (IPFN…FLLE), and 158 to 193 (IQLE…IRPH). The Ca(2+) site is built by Asp66, Thr68, Asp70, Leu72, and Glu77. Residues 296 to 312 (LEEGMLPFNLAEAQRQQ) form a linker loop domain region. The tract at residues 322 to 613 (FLLQLAESAY…LQRWFYVDFG (292 aa)) is carrier domain. 3 Solcar repeats span residues 327 to 419 (AESA…VRDK), 427 to 511 (VPLL…VKAS), and 519 to 607 (VSPG…LQRW). A helical transmembrane segment spans residues 333–350 (FGLGSIAGAVGATAVYPI). The Mitochondrial matrix segment spans residues 351 to 393 (DLVKTRMQNQRSTGSFVGELMYKNSFDCFKKVLRYEGFFGLYR). Lys354 and Lys373 each carry N6-acetyllysine. The helical transmembrane segment at 394–413 (GLLPQLLGVAPEKAIKLTVN) threads the bilayer. The Mitochondrial intermembrane segment spans residues 414 to 436 (DFVRDKFMHKDGSVPLLAEIFAG). Residues 437–450 (GCAGGSQVIFTNPL) traverse the membrane as a helical segment. Topologically, residues 451-485 (EIVKIRLQVAGEITTGPRVSALSVVRDLGFFGIYK) are mitochondrial matrix. Position 454 is an N6-methyllysine (Lys454). Lys485 is subject to N6-acetyllysine; alternate. Lys485 carries the post-translational modification N6-succinyllysine; alternate. Residues 486-505 (GAKACFLRDIPFSAIYFPCY) form a helical membrane-spanning segment. The Mitochondrial intermembrane segment spans residues 506–524 (AHVKASFANEDGQVSPGSL). The helical transmembrane segment at 525–542 (LLAGAIAGMPAASLVTPA) threads the bilayer. Over 543–581 (DVIKTRLQVAARAGQTTYSGVTDCFRKILREEGPKALWK) the chain is Mitochondrial matrix. Lys581 carries the N6-succinyllysine modification. Residues 582–601 (GAGARVFRSSPQFGVTLLTY) traverse the membrane as a helical segment. Over 602–676 (ELLQRWFYVD…STSKVTAVGS (75 aa)) the chain is Mitochondrial intermembrane. Residues 614–676 (GVKPVGSELV…STSKVTAVGS (63 aa)) are C-terminal domain. At Lys663 the chain carries N6-acetyllysine. A Phosphoserine modification is found at Ser667.

This sequence belongs to the mitochondrial carrier (TC 2.A.29) family. Homodimer (via N-terminus).

The protein resides in the mitochondrion inner membrane. The enzyme catalyses L-aspartate(in) + L-glutamate(out) + H(+)(out) = L-aspartate(out) + L-glutamate(in) + H(+)(in). The catalysed reaction is 3-sulfino-L-alanine(out) + L-glutamate(in) + H(+)(in) = 3-sulfino-L-alanine(in) + L-glutamate(out) + H(+)(out). It catalyses the reaction 3-sulfino-L-alanine(out) + L-aspartate(in) = 3-sulfino-L-alanine(in) + L-aspartate(out). L-aspartate and 3-sulfino-L-alanine uptake are both inhibited by glisoxepide. Its function is as follows. Mitochondrial electrogenic aspartate/glutamate antiporter that favors efflux of aspartate and entry of glutamate and proton within the mitochondria as part of the malate-aspartate shuttle. Also mediates the uptake of L-cysteinesulfinate (3-sulfino-L-alanine) by mitochondria in exchange of L-glutamate and proton. Can also exchange L-cysteinesulfinate with aspartate in their anionic form without any proton translocation. Lacks transport activity towards gamma-aminobutyric acid (GABA). The polypeptide is Electrogenic aspartate/glutamate antiporter SLC25A13, mitochondrial (Rattus norvegicus (Rat)).